Reading from the N-terminus, the 373-residue chain is tRNA N6-adenosine threonylcarbamoyltransferase (373 aa).

His-128, His-132, and Tyr-149 together coordinate a divalent metal cation. Substrate is bound by residues 149-153 (YVSGG), Asp-181, Gly-196, Glu-200, and Asn-302. Asp-331 lines the a divalent metal cation pocket.

This sequence belongs to the KAE1 / TsaD family. Component of the EKC/KEOPS complex composed of at least BUD32, CGI121, GON7, KAE1 and PCC1; the whole complex dimerizes. A divalent metal cation serves as cofactor.

It is found in the cytoplasm. It localises to the nucleus. The catalysed reaction is L-threonylcarbamoyladenylate + adenosine(37) in tRNA = N(6)-L-threonylcarbamoyladenosine(37) in tRNA + AMP + H(+). Its function is as follows. Component of the EKC/KEOPS complex that is required for the formation of a threonylcarbamoyl group on adenosine at position 37 (t(6)A37) in tRNAs that read codons beginning with adenine. The complex is probably involved in the transfer of the threonylcarbamoyl moiety of threonylcarbamoyl-AMP (TC-AMP) to the N6 group of A37. KAE1 likely plays a direct catalytic role in this reaction, but requires other protein(s) of the complex to fulfill this activity. The EKC/KEOPS complex also promotes both telomere uncapping and telomere elongation. The complex is required for efficient recruitment of transcriptional coactivators. The protein is tRNA N6-adenosine threonylcarbamoyltransferase of Candida glabrata (strain ATCC 2001 / BCRC 20586 / JCM 3761 / NBRC 0622 / NRRL Y-65 / CBS 138) (Yeast).